We begin with the raw amino-acid sequence, 186 residues long: Lipid A palmitoyltransferase PagP (186 aa).

Positions 1-25 are cleaved as a signal peptide; sequence MNVSKYVAIFSFVFIQLISVGKVFA. Catalysis depends on residues H58, D101, and S102.

This sequence belongs to the lipid A palmitoyltransferase family. As to quaternary structure, homodimer.

Its subcellular location is the cell outer membrane. It catalyses the reaction lipid A (E. coli) + a 1-hexadecanoyl-2-acyl-sn-glycero-3-phosphocholine = hepta-acyl lipid A (E. coli) + a 2-acyl-sn-glycero-3-phosphocholine. The enzyme catalyses lipid IIA + a 1-hexadecanoyl-2-acyl-sn-glycero-3-phosphocholine = lipid IIB + a 2-acyl-sn-glycero-3-phosphocholine. The catalysed reaction is lipid IVA (E. coli) + a 1-hexadecanoyl-2-acyl-sn-glycero-3-phosphocholine = lipid IVB (E. coli) + a 2-acyl-sn-glycero-3-phosphocholine. Its activity is regulated as follows. Inhibited by lauryldimethylamine oxide (LDAO) and dodecylphosphocholine (DPC). Its function is as follows. Transfers a palmitate residue from the sn-1 position of a phospholipid to the N-linked hydroxymyristate on the proximal unit of lipid A or its precursors. Phosphatidylglycerol (PtdGro), phosphatidylethanolamine (PtdEtn), phosphatidylserine (PtdSer) and phosphatidic acid (Ptd-OH) are all effective acyl donors. This Escherichia coli (strain K12) protein is Lipid A palmitoyltransferase PagP.